A 253-amino-acid chain; its full sequence is Probable transcriptional regulatory protein Tlet_1011 (253 aa).

This sequence belongs to the TACO1 family.

It is found in the cytoplasm. The protein is Probable transcriptional regulatory protein Tlet_1011 of Pseudothermotoga lettingae (strain ATCC BAA-301 / DSM 14385 / NBRC 107922 / TMO) (Thermotoga lettingae).